Here is a 186-residue protein sequence, read N- to C-terminus: Nicotinamide-nucleotide adenylyltransferase (186 aa).

The protein belongs to the archaeal NMN adenylyltransferase family.

The protein localises to the cytoplasm. The catalysed reaction is beta-nicotinamide D-ribonucleotide + ATP + H(+) = diphosphate + NAD(+). It functions in the pathway cofactor biosynthesis; NAD(+) biosynthesis; NAD(+) from nicotinamide D-ribonucleotide: step 1/1. This is Nicotinamide-nucleotide adenylyltransferase from Pyrococcus horikoshii (strain ATCC 700860 / DSM 12428 / JCM 9974 / NBRC 100139 / OT-3).